We begin with the raw amino-acid sequence, 286 residues long: 4-hydroxybenzoate octaprenyltransferase (286 aa).

Helical transmembrane passes span 22 to 42, 45 to 65, 98 to 118, 143 to 163, 213 to 233, 238 to 255, and 266 to 286; these read IGTL…EKAM, LSVL…GCVI, LFIV…LYTI, FFLG…TIEA, IIAL…YLSQ, YFIV…QCRL, and NAFL…LFGI.

It belongs to the UbiA prenyltransferase family. Mg(2+) serves as cofactor.

It localises to the cell inner membrane. It catalyses the reaction all-trans-octaprenyl diphosphate + 4-hydroxybenzoate = 4-hydroxy-3-(all-trans-octaprenyl)benzoate + diphosphate. It participates in cofactor biosynthesis; ubiquinone biosynthesis. Functionally, catalyzes the prenylation of para-hydroxybenzoate (PHB) with an all-trans polyprenyl group. Mediates the second step in the final reaction sequence of ubiquinone-8 (UQ-8) biosynthesis, which is the condensation of the polyisoprenoid side chain with PHB, generating the first membrane-bound Q intermediate 3-octaprenyl-4-hydroxybenzoate. The sequence is that of 4-hydroxybenzoate octaprenyltransferase from Histophilus somni (strain 129Pt) (Haemophilus somnus).